Consider the following 206-residue polypeptide: Adenylate kinase (206 aa).

Residue 10–15 (GAGKGT) participates in ATP binding. Positions 30–59 (STGDILREAVQKGTPLGKKAKEYMERGELV) are NMP. AMP is bound by residues threonine 31, 57 to 59 (ELV), 82 to 85 (GFPR), and glutamine 89. ATP is bound by residues arginine 120, arginine 124, and 133–134 (VY). Positions 123-153 (GRRINPETGEVYHVKYNPPPPGVKVIQREDD) are LID. Arginine 161 lines the AMP pocket. Lysine 189 is an ATP binding site.

The protein belongs to the adenylate kinase family. Monomer.

It localises to the cytoplasm. It catalyses the reaction AMP + ATP = 2 ADP. It participates in purine metabolism; AMP biosynthesis via salvage pathway; AMP from ADP: step 1/1. Catalyzes the reversible transfer of the terminal phosphate group between ATP and AMP. Plays an important role in cellular energy homeostasis and in adenine nucleotide metabolism. The chain is Adenylate kinase from Aquifex aeolicus (strain VF5).